A 157-amino-acid polypeptide reads, in one-letter code: Small ribosomal subunit protein uS7 (157 aa).

It belongs to the universal ribosomal protein uS7 family. Part of the 30S ribosomal subunit. Contacts proteins S9 and S11.

In terms of biological role, one of the primary rRNA binding proteins, it binds directly to 16S rRNA where it nucleates assembly of the head domain of the 30S subunit. Is located at the subunit interface close to the decoding center, probably blocks exit of the E-site tRNA. The protein is Small ribosomal subunit protein uS7 of Pseudomonas fluorescens (strain Pf0-1).